Here is a 155-residue protein sequence, read N- to C-terminus: Pathogenesis-related protein B (155 aa).

Belongs to the BetVI family.

This is Pathogenesis-related protein B (PCPR1-3) from Petroselinum crispum (Parsley).